Reading from the N-terminus, the 279-residue chain is Elongation factor Ts (279 aa).

The involved in Mg(2+) ion dislocation from EF-Tu stretch occupies residues 80–83; the sequence is TDFV.

This sequence belongs to the EF-Ts family.

It is found in the cytoplasm. In terms of biological role, associates with the EF-Tu.GDP complex and induces the exchange of GDP to GTP. It remains bound to the aminoacyl-tRNA.EF-Tu.GTP complex up to the GTP hydrolysis stage on the ribosome. In Borreliella burgdorferi (strain ZS7) (Borrelia burgdorferi), this protein is Elongation factor Ts.